A 217-amino-acid polypeptide reads, in one-letter code: Probable transaldolase (217 aa).

Lys-83 functions as the Schiff-base intermediate with substrate in the catalytic mechanism.

This sequence belongs to the transaldolase family. Type 3B subfamily.

It localises to the cytoplasm. The enzyme catalyses D-sedoheptulose 7-phosphate + D-glyceraldehyde 3-phosphate = D-erythrose 4-phosphate + beta-D-fructose 6-phosphate. It functions in the pathway carbohydrate degradation; pentose phosphate pathway; D-glyceraldehyde 3-phosphate and beta-D-fructose 6-phosphate from D-ribose 5-phosphate and D-xylulose 5-phosphate (non-oxidative stage): step 2/3. Transaldolase is important for the balance of metabolites in the pentose-phosphate pathway. The polypeptide is Probable transaldolase (Caulobacter vibrioides (strain NA1000 / CB15N) (Caulobacter crescentus)).